The chain runs to 85 residues: uncharacterized protein (85 aa).

This sequence belongs to the YciI family.

This is an uncharacterized protein from Bacillus subtilis (strain 168).